A 54-amino-acid chain; its full sequence is Small ribosomal subunit protein uS14 (54 aa).

Residues cysteine 19, cysteine 22, cysteine 37, and cysteine 40 each coordinate Zn(2+).

This sequence belongs to the universal ribosomal protein uS14 family. Zinc-binding uS14 subfamily. As to quaternary structure, part of the 30S ribosomal subunit. Zn(2+) is required as a cofactor.

In terms of biological role, binds 16S rRNA, required for the assembly of 30S particles. This chain is Small ribosomal subunit protein uS14, found in Aeropyrum pernix (strain ATCC 700893 / DSM 11879 / JCM 9820 / NBRC 100138 / K1).